We begin with the raw amino-acid sequence, 445 residues long: MKPVIALVGRPNVGKSTLFNRLTRSRDALVADLPGLTRDRHYGEGRVGERPYLVVDTGGFEPVAKDGILHEMARQTRQAVEEADVVVFIVDGRNGLAPQDKSIADYLRKTGRPIFLVVNKAEGMKYTAVATDFYELGLGDPRAISAAHGDGVTDMINEALEVAYAGQPEEADEDDPSRGIKIAIVGRPNVGKSTLVNALIGEDRVIAFDMPGTTRDSIYVDFERNGKKYTLIDTAGLRRRGKVFEAIEKFSVVKTLQSISDANVVILLLDAQQDISDQDAHIAGFVVEQGRALVIGVNKWDGLDEHARDRAKADLTRKLKFLDFAKSHYISAAKKTGIGALMRSVDDAYAAAMAKLPTPKLTRALIEAVEFQQPRRRGPVRPKLRYAHQGGQNPPLIVIHGNALDAVTETYKRYLENRFRETFSLTGTPLRIEFRSSNNPYADKS.

EngA-type G domains are found at residues 3 to 167 (PVIA…YAGQ) and 180 to 353 (IKIA…AAAM). Residues 9 to 16 (GRPNVGKS), 56 to 60 (DTGGF), 119 to 122 (NKAE), 186 to 193 (GRPNVGKS), 233 to 237 (DTAGL), and 298 to 301 (NKWD) each bind GTP. Residues 354 to 438 (AKLPTPKLTR…PLRIEFRSSN (85 aa)) enclose the KH-like domain.

The protein belongs to the TRAFAC class TrmE-Era-EngA-EngB-Septin-like GTPase superfamily. EngA (Der) GTPase family. In terms of assembly, associates with the 50S ribosomal subunit.

In terms of biological role, GTPase that plays an essential role in the late steps of ribosome biogenesis. In Burkholderia lata (strain ATCC 17760 / DSM 23089 / LMG 22485 / NCIMB 9086 / R18194 / 383), this protein is GTPase Der.